Consider the following 606-residue polypeptide: Kelch-like protein 41 (606 aa).

Serine 3 is modified (phosphoserine). The 68-residue stretch at 33–100 (IDCTLKAGDK…LYSASIDLND (68 aa)) folds into the BTB domain. One can recognise a BACK domain in the interval 135-237 (CLAILRLGLL…AEKYFKDHVE (103 aa)). Kelch repeat units follow at residues 346 to 398 (QVYV…EVDD), 399 to 447 (KIYV…SHNG), 448 to 495 (MIYC…IHKG), 497 to 542 (IVIA…SLAG), and 544 to 599 (LYAI…TRLN).

Interacts with NRAP. Part of a complex that contains CUL3, RBX1 and KLHL41. Interacts with LASP1. Post-translationally, ubiquitinated by E3 ubiquitin ligase complex formed by CUL3 and RBX1 and probably targeted for proteasome-independent degradation. Quinone-induced oxidative stress increases its ubiquitination. Primarily expressed in skeletal muscle. Also found in heart and lung.

It localises to the cytoplasm. It is found in the cytoskeleton. The protein resides in the cell projection. The protein localises to the pseudopodium. Its subcellular location is the ruffle. It localises to the myofibril. It is found in the sarcomere. The protein resides in the m line. The protein localises to the sarcoplasmic reticulum membrane. Its subcellular location is the endoplasmic reticulum membrane. Its function is as follows. Involved in skeletal muscle development and differentiation. Regulates proliferation and differentiation of myoblasts and plays a role in myofibril assembly by promoting lateral fusion of adjacent thin fibrils into mature, wide myofibrils. Required for pseudopod elongation in transformed cells. The polypeptide is Kelch-like protein 41 (Klhl41) (Rattus norvegicus (Rat)).